The sequence spans 512 residues: Peroxisomal N(1)-acetyl-spermine/spermidine oxidase (512 aa).

Position 1 is an N-acetylmethionine (Met-1). The propeptide occupies 1–6 (MQSGGR). FAD is bound by residues Ala-25, Glu-46, Arg-54, and 70-71 (HW). Substrate contacts are provided by His-73 and Val-195. Residue Val-248 coordinates FAD. Asn-321 is a binding site for substrate. FAD-binding positions include Glu-473 and 482 to 483 (TT). Positions 510-512 (PRL) match the Microbody targeting signal motif.

Belongs to the flavin monoamine oxidase family. Monomer. FAD is required as a cofactor.

The protein resides in the peroxisome. It is found in the cytoplasm. The enzyme catalyses N(1)-acetylspermine + O2 + H2O = 3-acetamidopropanal + spermidine + H2O2. The catalysed reaction is N(1)-acetylspermidine + O2 + H2O = 3-acetamidopropanal + putrescine + H2O2. It catalyses the reaction N(1),N(12)-diacetylspermine + O2 + H2O = 3-acetamidopropanal + N(1)-acetylspermidine + H2O2. It functions in the pathway amine and polyamine metabolism; spermine metabolism. Flavoenzyme which catalyzes the oxidation of N(1)-acetylspermine to spermidine and is thus involved in the polyamine back-conversion. Can also oxidize N(1)-acetylspermidine to putrescine. Substrate specificity: N(1)-acetylspermine = N(1)-acetylspermidine &gt; N(1),N(12)-diacylspermine &gt;&gt; spermine. Does not oxidize spermidine. Plays an important role in the regulation of polyamine intracellular concentration. The sequence is that of Peroxisomal N(1)-acetyl-spermine/spermidine oxidase (PAOX) from Bos taurus (Bovine).